Reading from the N-terminus, the 273-residue chain is Zinc finger protein 80 (273 aa).

7 consecutive C2H2-type zinc fingers follow at residues 49 to 71 (YKCKECGSVFNKNSLLVRHQQIH), 77 to 99 (YECQECGKAFPEKVDFVRHVRIH), 103 to 127 (KPCKCVECGKVFNRRSHLLCHHQIH), 133 to 155 (YECSECGRTFSYHSVFIQHRMTH), 161 to 183 (FGCKECGKSFYYNSSLTRHMKIH), 189 to 211 (YKCSECGKTFTYHSVFFRHSMTH), and 217 to 239 (YECKECGKGFYYSYSLTRHTRSH).

This sequence belongs to the krueppel C2H2-type zinc-finger protein family.

Its subcellular location is the nucleus. Its function is as follows. May be involved in transcriptional regulation. The sequence is that of Zinc finger protein 80 (ZNF80) from Pongo pygmaeus (Bornean orangutan).